The primary structure comprises 279 residues: Replication protein A 32 kDa subunit A (279 aa).

Positions M1 to P39 are disordered. The OB DNA-binding region spans V71–V145. A disordered region spans residues G181 to G210. A compositionally biased stretch (polar residues) spans E190 to S199.

This sequence belongs to the replication factor A protein 2 family. As to quaternary structure, heterotrimer of RPA1, RPA2 and RPA3 (canonical replication protein A complex). Interacts with RPA1A, RPA1B and RPA3. Post-translationally, phosphorylated in a cell-cycle-dependent manner (from the S phase until mitosis). In response to DNA damage, recruited to DNA-repair nuclear foci, as a hypophosphorylated form. In terms of tissue distribution, expressed in root tips, roots, shoot apical meristem (SAM), young leaves, flag leaves and ears, and at lower levels in mature leaves.

Its subcellular location is the nucleus. Component of the replication protein A complex (RPA) required for DNA recombination, repair and replication. The activity of RPA is mediated by single-stranded DNA binding and protein interactions. The chain is Replication protein A 32 kDa subunit A (RPA2A) from Oryza sativa subsp. japonica (Rice).